We begin with the raw amino-acid sequence, 135 residues long: Class I hydrophobin dewA (135 aa).

The first 18 residues, 1–18 (MRFIVSLLAFTAAATATA), serve as a signal peptide directing secretion. Disulfide bonds link C44-C114, C51-C108, C52-C84, and C115-C122. The N-linked (GlcNAc...) asparagine glycan is linked to N60.

It belongs to the fungal hydrophobin family. As to quaternary structure, forms homodimers at high concentrations, and these dimers are off-pathway to rodlet formation. Dissociation of the dimers into monomers, with resultant exposure of the hydrophobic face, is necessary for self-assembly to form functional amyloid fibrils called rodlets. Self-assembly into fibrillar rodlets occurs spontaneously at hydrophobic:hydrophilic interfaces and the rodlets further associate laterally to form amphipathic monolayers.

Its subcellular location is the secreted. It is found in the spore wall. Its function is as follows. Aerial growth, conidiation, and dispersal of filamentous fungi in the environment rely upon a capability of their secreting small amphipathic proteins called hydrophobins (HPBs) with low sequence identity. Class I can self-assemble into an outermost layer of rodlet bundles on aerial cell surfaces, conferring cellular hydrophobicity that supports fungal growth, development and dispersal; whereas Class II form highly ordered films at water-air interfaces through intermolecular interactions but contribute nothing to the rodlet structure. DewA is a class I hydrophobin that contributes to spore wall hydrophobicity. The sequence is that of Class I hydrophobin dewA from Emericella nidulans (strain FGSC A4 / ATCC 38163 / CBS 112.46 / NRRL 194 / M139) (Aspergillus nidulans).